We begin with the raw amino-acid sequence, 62 residues long: Photosystem II reaction center protein Z (62 aa).

The next 2 helical transmembrane spans lie at 8 to 28 and 41 to 61; these read AVFALIATSSILLISVPVVFA and FSGTSLWIALVFLVGILNSLI.

Belongs to the PsbZ family. As to quaternary structure, PSII is composed of 1 copy each of membrane proteins PsbA, PsbB, PsbC, PsbD, PsbE, PsbF, PsbH, PsbI, PsbJ, PsbK, PsbL, PsbM, PsbT, PsbY, PsbZ, Psb30/Ycf12, at least 3 peripheral proteins of the oxygen-evolving complex and a large number of cofactors. It forms dimeric complexes.

It is found in the plastid. The protein localises to the chloroplast thylakoid membrane. In terms of biological role, may control the interaction of photosystem II (PSII) cores with the light-harvesting antenna, regulates electron flow through the 2 photosystem reaction centers. PSII is a light-driven water plastoquinone oxidoreductase, using light energy to abstract electrons from H(2)O, generating a proton gradient subsequently used for ATP formation. The chain is Photosystem II reaction center protein Z from Lotus japonicus (Lotus corniculatus var. japonicus).